The chain runs to 443 residues: C4-dicarboxylate transport protein (443 aa).

A run of 10 helical transmembrane segments spans residues 10–30, 46–66, 78–98, 130–150, 152–172, 199–219, 224–244, 291–311, 332–352, and 354–374; these read SLYFQVIVAIAIGILLGHFYP, LIKMVIAPIIFCTVVSGIAGM, YALLYFEIVSTIALLIGLIVV, SIVGFILNIIPATIVGAFANG, ILQVLMFSVVFGFALHRLGAY, PLGALGAMAFTIGAYGVGSLV, LMICFYITCVVFVLVVLGAIC, VVGLVIPTGYSFNLDGTSIYL, ITLLLVLLLSSKGAAGVTGSG, and IVLAATLSAVGHLPVAGLALI. Residues 415 to 443 are disordered; it reads ELASGGRPITDTRETDDLGVAEGPAPSIK.

This sequence belongs to the dicarboxylate/amino acid:cation symporter (DAACS) (TC 2.A.23) family.

It localises to the cell inner membrane. In terms of biological role, responsible for the transport of dicarboxylates such as succinate, fumarate, and malate from the periplasm across the membrane. This is C4-dicarboxylate transport protein from Pseudomonas fluorescens (strain ATCC BAA-477 / NRRL B-23932 / Pf-5).